We begin with the raw amino-acid sequence, 505 residues long: ATP synthase subunit beta, mitochondrial (505 aa).

Residues M1 to K31 constitute a mitochondrion transit peptide. ATP is bound at residue G183–T190.

Belongs to the ATPase alpha/beta chains family. As to quaternary structure, F-type ATPases have 2 components, CF(1) - the catalytic core - and CF(0) - the membrane proton channel. CF(1) has five subunits: alpha(3), beta(3), gamma(1), delta(1), epsilon(1). CF(0) has three main subunits: a, b and c.

It is found in the mitochondrion. The protein resides in the mitochondrion inner membrane. It carries out the reaction ATP + H2O + 4 H(+)(in) = ADP + phosphate + 5 H(+)(out). Mitochondrial membrane ATP synthase (F(1)F(0) ATP synthase or Complex V) produces ATP from ADP in the presence of a proton gradient across the membrane which is generated by electron transport complexes of the respiratory chain. F-type ATPases consist of two structural domains, F(1) - containing the extramembraneous catalytic core, and F(0) - containing the membrane proton channel, linked together by a central stalk and a peripheral stalk. During catalysis, ATP synthesis in the catalytic domain of F(1) is coupled via a rotary mechanism of the central stalk subunits to proton translocation. Subunits alpha and beta form the catalytic core in F(1). Rotation of the central stalk against the surrounding alpha(3)beta(3) subunits leads to hydrolysis of ATP in three separate catalytic sites on the beta subunits. The polypeptide is ATP synthase subunit beta, mitochondrial (Drosophila melanogaster (Fruit fly)).